A 236-amino-acid polypeptide reads, in one-letter code: (5-formylfuran-3-yl)methyl phosphate synthase (236 aa).

K27 (schiff-base intermediate with substrate) is an active-site residue. The Proton acceptor role is filled by K85.

It belongs to the MfnB family.

It carries out the reaction 2 D-glyceraldehyde 3-phosphate = 4-(hydroxymethyl)-2-furancarboxaldehyde phosphate + phosphate + 2 H2O. Its pathway is cofactor biosynthesis; methanofuran biosynthesis. Its function is as follows. Catalyzes the formation of 4-(hydroxymethyl)-2-furancarboxaldehyde phosphate (4-HFC-P) from two molecules of glyceraldehyde-3-P (GA-3-P). This is (5-formylfuran-3-yl)methyl phosphate synthase from Methanococcus maripaludis (strain C6 / ATCC BAA-1332).